The sequence spans 309 residues: tRNA dimethylallyltransferase 1 (309 aa).

14-21 (GPTASGKS) contributes to the ATP binding site. 16 to 21 (TASGKS) contributes to the substrate binding site. The segment at 39-42 (DSMQ) is interaction with substrate tRNA.

This sequence belongs to the IPP transferase family. Monomer. The cofactor is Mg(2+).

It carries out the reaction adenosine(37) in tRNA + dimethylallyl diphosphate = N(6)-dimethylallyladenosine(37) in tRNA + diphosphate. In terms of biological role, catalyzes the transfer of a dimethylallyl group onto the adenine at position 37 in tRNAs that read codons beginning with uridine, leading to the formation of N6-(dimethylallyl)adenosine (i(6)A). The sequence is that of tRNA dimethylallyltransferase 1 from Pelobacter propionicus (strain DSM 2379 / NBRC 103807 / OttBd1).